Here is a 628-residue protein sequence, read N- to C-terminus: MDLISVLPSASKSCVCLHKPLSSSTHKLKPFCRTIRILGMPRPRKSVLMVSSMSISVNTLVSDDAVQRRTGGYHSNLWNDDVIQFLSTPYGELAYRERAERLIDEVRNIFNSMSLEDGEFSDLIIQRLWMVDNVERLGIDRHFKNEIKSALDYVYSYWSQKGIGCGTKSIITDLNSTALGFRTLRLHGYPVSADVLKHFRNQIGQFVSCPSETEEDIRSMVNLYRASLIAFPGEEVMEEAESFSEKYLKETLQKIPDCSLSREIGDVLEHGWHTNLPRFEARNYIDVFGQDTKNMESNRKTEKLLELAKLEFNIFQSIQKTELESLLRWWNDSGSPQITFTRHRHVEYYTLASCIAFEPQHSGFRLGFAKACHIITVLDDMYDLFGTVEELKLFTAAIKRWDPSATDCLPQYMKGIYMMVYNTVNEMSAEAQKAQGRDTLNYARQAWEVYLDSYVQEAKWIATGYLPTFEEYLENGKVSSGHRVSALQPMLTMDIPFPPHILKEVDFPSNLNDLACAILRLRGDTRCYQEDRARGEETSCISCYMKDNPGATEEDALNHLNVMISGVIKELNWELLKPDSSVPISSKKINFDITRAFHYGYKYRDGYSVSSVETKSLVMRTLLEPVPL.

The transit peptide at 1 to 51 directs the protein to the chloroplast; that stretch reads MDLISVLPSASKSCVCLHKPLSSSTHKLKPFCRTIRILGMPRPRKSVLMVS. Residues Asp-379, Asp-383, and Asp-531 each contribute to the Mg(2+) site. A DDXXD motif motif is present at residues 379 to 383; sequence DDMYD.

Belongs to the terpene synthase family. Tpsd subfamily. Mg(2+) serves as cofactor. Mn(2+) is required as a cofactor.

It localises to the plastid. The protein localises to the chloroplast. The catalysed reaction is (2E)-geranyl diphosphate = (1S,5S)-beta-pinene + diphosphate. It carries out the reaction (2E)-geranyl diphosphate = (1S,5S)-alpha-pinene + diphosphate. It functions in the pathway terpene metabolism; oleoresin biosynthesis. Its pathway is secondary metabolite biosynthesis; terpenoid biosynthesis. Monoterpene synthase (TPS) involved in the biosynthesis of monoterpene natural products included in conifer oleoresin secretions and volatile emissions; these compounds contribute to biotic and abiotic stress defense against herbivores and pathogens. Catalyzes the conversion of (2E)-geranyl diphosphate (GPP) to (-)-beta-pinene and, to a lower extent, to (-)-alpha-pinene. This Pinus banksiana (Jack pine) protein is (-)-beta-pinene synthase 1, chloroplastic.